The primary structure comprises 518 residues: Serine/threonine-protein kinase PRR1 (518 aa).

M1 carries the N-acetylmethionine modification. A compositionally biased stretch (polar residues) spans 1-12 (MDEYSSIYSQPK). Residues 1–59 (MDEYSSIYSQPKTPRLKQEGFPDSIGDQHEKALIDENGEEDKKMASTEGTTGDSRSTPL) are disordered. The segment covering 16–45 (LKQEGFPDSIGDQHEKALIDENGEEDKKMA) has biased composition (basic and acidic residues). Residues 47-59 (TEGTTGDSRSTPL) show a composition bias toward polar residues. Position 132 is a phosphoserine (S132). In terms of domain architecture, Protein kinase spans 192–508 (WKKVRPIGSG…INEIYESPFV (317 aa)). Residues 198–206 (IGSGNFSTV) and K225 each bind ATP. D354 functions as the Proton acceptor in the catalytic mechanism.

It belongs to the protein kinase superfamily. CAMK Ser/Thr protein kinase family. NIM1 subfamily.

Its subcellular location is the cytoplasm. It carries out the reaction L-seryl-[protein] + ATP = O-phospho-L-seryl-[protein] + ADP + H(+). It catalyses the reaction L-threonyl-[protein] + ATP = O-phospho-L-threonyl-[protein] + ADP + H(+). In terms of biological role, protein kinase that functions as a regulator in the pheromone-induced mating pathway downstream of mitogen-activated protein kinase (MAPK) FUS3. Diminishes transcriptional induction of genes in response to pheromone signaling. The chain is Serine/threonine-protein kinase PRR1 (PRR1) from Saccharomyces cerevisiae (strain ATCC 204508 / S288c) (Baker's yeast).